A 90-amino-acid chain; its full sequence is Serine-rich and transmembrane domain-containing 2 (90 aa).

N-linked (GlcNAc...) asparagine glycosylation is present at Asn-11. A helical transmembrane segment spans residues 38–58; that stretch reads YVGLFLSLLAILLILLFTMLL. The interval 69–90 is disordered; sequence SDSTESVPQFTDVEMQSRIPTP.

Its subcellular location is the membrane. This is Serine-rich and transmembrane domain-containing 2 from Homo sapiens (Human).